The sequence spans 87 residues: uncharacterized protein (87 aa).

It to H.pylori HP0495/JHP0447.

This is an uncharacterized protein from Campylobacter jejuni subsp. jejuni serotype O:2 (strain ATCC 700819 / NCTC 11168).